Reading from the N-terminus, the 293-residue chain is Ribonuclease HII (293 aa).

Residues 81 to 271 (THIAGVDEAG…VREALGLPTG (191 aa)) enclose the RNase H type-2 domain. A divalent metal cation-binding residues include D87, E88, and D180. The tract at residues 273 to 293 (PPSALQAELFPEAPSRTGVKS) is disordered.

This sequence belongs to the RNase HII family. Requires Mn(2+) as cofactor. Mg(2+) is required as a cofactor.

The protein resides in the cytoplasm. It carries out the reaction Endonucleolytic cleavage to 5'-phosphomonoester.. Functionally, endonuclease that specifically degrades the RNA of RNA-DNA hybrids. This chain is Ribonuclease HII, found in Myxococcus xanthus (strain DK1622).